Reading from the N-terminus, the 61-residue chain is Acetylcholinesterase toxin C (61 aa).

4 cysteine pairs are disulfide-bonded: Cys3–Cys22, Cys17–Cys39, Cys41–Cys52, and Cys53–Cys59.

It belongs to the three-finger toxin family. Short-chain subfamily. Acn-esterase inhibitor sub-subfamily. In terms of tissue distribution, expressed by the venom gland.

It localises to the secreted. Functionally, inhibits acetylcholinesterase. The sequence is that of Acetylcholinesterase toxin C from Dendroaspis polylepis polylepis (Black mamba).